A 325-amino-acid chain; its full sequence is Aquaporin-8 (325 aa).

The Cytoplasmic segment spans residues 1-10 (MALRSPARDY). The chain crosses the membrane as a helical span at residues 11 to 31 (LVSMIGELVGTFLFLFFAFAA). Residues 32–52 (AQTANQPNGTKPLTPNATDTS) lie on the Extracellular side of the membrane. Residues N39 and N47 are each glycosylated (N-linked (GlcNAc...) asparagine). The helical transmembrane segment at 53 to 73 (KLLYIALAFGASLAANVWVFF) threads the bilayer. Over 74 to 100 (RVSGGQFNPAVTLALVLIRAVSPTKAL) the chain is Cytoplasmic. An NPA 1 motif is present at residues 81–83 (NPA). A helical membrane pass occupies residues 101-121 (ILIPAQLVGGSLAAAAVKGII). At 122–140 (PGDDILFAVSLGPGVANVQ) the chain is on the extracellular side. A helical transmembrane segment spans residues 141 to 161 (GLFIELLLTFMLVFTILMLVA). Topologically, residues 162 to 167 (EKTKST) are cytoplasmic. Residues 168–188 (FVAPIGIGFSLFIGHLVGIFW) traverse the membrane as a helical segment. Topologically, residues 189–212 (TGAGINPARAFSPALIQASFPSYH) are extracellular. The NPA 2 motif lies at 194-196 (NPA). Residues 213–233 (WIYWLGPALGSFLAAGLYLGL) traverse the membrane as a helical segment. At 234–325 (KEMKYELVGG…GSPDSTDLPT (92 aa)) the chain is on the cytoplasmic side. Disordered stretches follow at residues 279–298 (LGQFEGTTEGHRSPVDLERG) and 305–325 (EDDPHIRKSRYGSPDSTDLPT). The segment covering 286-298 (TEGHRSPVDLERG) has biased composition (basic and acidic residues).

The protein belongs to the MIP/aquaporin (TC 1.A.8) family.

Its subcellular location is the cell membrane. The catalysed reaction is H2O2(out) = H2O2(in). It carries out the reaction H2O(in) = H2O(out). Its function is as follows. Plasma membrane water channel that regulates the reactive oxygen species (ROS)-signaling pathway through its capacity to act as a membrane channel for hydrogen peroxide uptake. Required for the formation of infection structures and infection, especially on host leaves where it is essential for the penetration into the host. Regulates the expression of proteins related to redox-regulation and intracellular signal transduction and plays a role in the distribution of mitochondria in the hyphae. The chain is Aquaporin-8 from Botryotinia fuckeliana (strain B05.10) (Noble rot fungus).